Consider the following 337-residue polypeptide: 4-hydroxythreonine-4-phosphate dehydrogenase (337 aa).

2 residues coordinate substrate: H137 and T138. A divalent metal cation contacts are provided by H167, H212, and H267. Substrate contacts are provided by K275, N284, and R293.

The protein belongs to the PdxA family. Homodimer. The cofactor is Zn(2+). Requires Mg(2+) as cofactor. Co(2+) serves as cofactor.

Its subcellular location is the cytoplasm. It catalyses the reaction 4-(phosphooxy)-L-threonine + NAD(+) = 3-amino-2-oxopropyl phosphate + CO2 + NADH. It participates in cofactor biosynthesis; pyridoxine 5'-phosphate biosynthesis; pyridoxine 5'-phosphate from D-erythrose 4-phosphate: step 4/5. Functionally, catalyzes the NAD(P)-dependent oxidation of 4-(phosphooxy)-L-threonine (HTP) into 2-amino-3-oxo-4-(phosphooxy)butyric acid which spontaneously decarboxylates to form 3-amino-2-oxopropyl phosphate (AHAP). The chain is 4-hydroxythreonine-4-phosphate dehydrogenase from Ectopseudomonas mendocina (strain ymp) (Pseudomonas mendocina).